The following is a 101-amino-acid chain: MNKSKRPFTKSKRSFRRRLPPIQSGDRIDYRNMSLISRFISEQGKILSRRVNRVTLKQQRLITIAIKQARILSLLPFLTNQKQFERSESTPRTTSLRTRKK.

Over residues 1–19 (MNKSKRPFTKSKRSFRRRL) the composition is skewed to basic residues. The segment at 1-23 (MNKSKRPFTKSKRSFRRRLPPIQ) is disordered.

It belongs to the bacterial ribosomal protein bS18 family. Part of the 30S ribosomal subunit.

The protein resides in the plastid. The protein localises to the chloroplast. The polypeptide is Small ribosomal subunit protein bS18c (Lobularia maritima (Sweet alyssum)).